The primary structure comprises 1104 residues: Protein transport protein SEC31 homolog B (1104 aa).

WD repeat units follow at residues 5 to 45, 62 to 109, 120 to 160, 170 to 210, 214 to 257, 261 to 301, and 304 to 344; these read KGVG…EIFK, PSSE…GSQP, VHKG…EPSH, ATQG…PIIN, SVRR…SPVR, GHQR…IVAE, and AGNN…RYGV. Position 526 is a phosphothreonine (T526). The interval 527 to 562 is disordered; that stretch reads PVSTSAKDFMPSDTDFSTKGEETQEMQEEEEESSDP. Residues 549 to 560 show a composition bias toward acidic residues; that stretch reads TQEMQEEEEESS. A WD 8 repeat occupies 662–707; sequence TLCDALASKLMAAGNTLAAVLCYICAGNVDRTVEIWSRSLANERDG. 4 disordered regions span residues 782–811, 851–874, 892–931, and 952–994; these read LSAEPETNTTASGNTQPQSTMPYNQEPTQA, HQAQPAPQPSFTPAPTSNAQPSMR, QQPTMSSHSFTGPSNNAYPVPPGPGQYAPSGPSQLGQYPN, and TPGV…SNVP. Polar residues-rich tracts occupy residues 786–811, 863–874, and 892–908; these read PETNTTASGNTQPQSTMPYNQEPTQA, PAPTSNAQPSMR, and QQPTMSSHSFTGPSNNA. Positions 959–977 are enriched in low complexity; that stretch reads SVQPASPPTQQAAAQAAPA.

The protein belongs to the WD repeat SEC31 family. In terms of assembly, interacts with SEC13A and SEC13B.

Its subcellular location is the golgi apparatus. It localises to the endoplasmic reticulum. In terms of biological role, required for protein transport from the endoplasmic reticulum to the Golgi apparatus. This Arabidopsis thaliana (Mouse-ear cress) protein is Protein transport protein SEC31 homolog B.